Consider the following 365-residue polypeptide: tRNA/tmRNA (uracil-C(5))-methyltransferase (365 aa).

Positions 189, 217, 222, 238, and 298 each coordinate S-adenosyl-L-methionine. Residue Cys323 is the Nucleophile of the active site. The Proton acceptor role is filled by Glu357.

The protein belongs to the class I-like SAM-binding methyltransferase superfamily. RNA M5U methyltransferase family. TrmA subfamily.

It carries out the reaction uridine(54) in tRNA + S-adenosyl-L-methionine = 5-methyluridine(54) in tRNA + S-adenosyl-L-homocysteine + H(+). It catalyses the reaction uridine(341) in tmRNA + S-adenosyl-L-methionine = 5-methyluridine(341) in tmRNA + S-adenosyl-L-homocysteine + H(+). Functionally, dual-specificity methyltransferase that catalyzes the formation of 5-methyluridine at position 54 (m5U54) in all tRNAs, and that of position 341 (m5U341) in tmRNA (transfer-mRNA). This is tRNA/tmRNA (uracil-C(5))-methyltransferase from Shewanella sediminis (strain HAW-EB3).